Reading from the N-terminus, the 218-residue chain is MKTEIQEIVTRLDQQSNKGEGGESMKWLFRPLLQMLAGGESVTIEDMATTTGKPVEEVKKVLQSLPSVEIDEQGRVVGLGLTLIPTPHHFTVDGKQLYAWCALDTLIFPALIGRSVNIESPCHSTGEPIRLNVEPDHIVSVEPSTAVVSIVTPDDMSSIRTAFCNEVHFFSSPNAAEDWLDQHPGGKVLSVEDAFELGRLMGTRYEESRPANGSCCDI.

The protein belongs to the MerB family.

It carries out the reaction an alkylmercury + H(+) = an alkane + Hg(2+). Functionally, cleaves the carbon-mercury bond of organomercurials such as phenylmercuric acetate. One product is Hg(2+), which is subsequently detoxified by the mercuric reductase. This Bacillus cereus protein is Alkylmercury lyase (merB1).